Reading from the N-terminus, the 204-residue chain is Large ribosomal subunit protein bL25 (204 aa).

This sequence belongs to the bacterial ribosomal protein bL25 family. CTC subfamily. In terms of assembly, part of the 50S ribosomal subunit; part of the 5S rRNA/L5/L18/L25 subcomplex. Contacts the 5S rRNA. Binds to the 5S rRNA independently of L5 and L18.

In terms of biological role, this is one of the proteins that binds to the 5S RNA in the ribosome where it forms part of the central protuberance. The chain is Large ribosomal subunit protein bL25 from Wolbachia sp. subsp. Brugia malayi (strain TRS).